The following is a 198-amino-acid chain: Cytochrome c oxidase assembly protein CtaG (198 aa).

Residues 1–12 are Cytoplasmic-facing; sequence MADTGQSDRKER. A helical; Signal-anchor for type II membrane protein membrane pass occupies residues 13 to 35; it reads SNGVIVGTCLAFVVGMVGMAYAA. Over 36–198 the chain is Periplasmic; sequence VPLYDMFCRV…QVKSRTENKL (163 aa).

This sequence belongs to the COX11/CtaG family.

The protein resides in the cell inner membrane. Exerts its effect at some terminal stage of cytochrome c oxidase synthesis, probably by being involved in the insertion of the copper B into subunit I. This chain is Cytochrome c oxidase assembly protein CtaG, found in Sinorhizobium medicae (strain WSM419) (Ensifer medicae).